The primary structure comprises 361 residues: Cyclin-D3-3 (361 aa).

Belongs to the cyclin family. Cyclin D subfamily.

Functionally, promotes divisions in the guard cells (GCs) after the guard mother cells (GMC) symmetric division. The sequence is that of Cyclin-D3-3 (CYCD3-3) from Arabidopsis thaliana (Mouse-ear cress).